A 462-amino-acid polypeptide reads, in one-letter code: Nitrogenase molybdenum-iron protein beta chain (462 aa).

[8Fe-7S] cluster is bound by residues C21, C46, C104, and S145.

Belongs to the NifD/NifK/NifE/NifN family. As to quaternary structure, tetramer of two alpha and two beta chains. Forms complex with the iron protein (nitrogenase component 2). [8Fe-7S] cluster serves as cofactor.

The catalysed reaction is N2 + 8 reduced [2Fe-2S]-[ferredoxin] + 16 ATP + 16 H2O = H2 + 8 oxidized [2Fe-2S]-[ferredoxin] + 2 NH4(+) + 16 ADP + 16 phosphate + 6 H(+). In terms of biological role, this molybdenum-iron protein is part of the nitrogenase complex that catalyzes the key enzymatic reactions in nitrogen fixation. The sequence is that of Nitrogenase molybdenum-iron protein beta chain (nifK) from Methanococcus maripaludis (Methanococcus deltae).